The primary structure comprises 418 residues: Acyl-[acyl-carrier-protein] desaturase 4, chloroplastic (418 aa).

A chloroplast-targeting transit peptide spans 1–70 (MASSGLAVAA…ATAAAPADTA (70 aa)). The Fe cation site is built by Glu152, Glu190, His193, Glu243, Glu276, and His279.

It belongs to the fatty acid desaturase type 2 family. Homodimer. Fe(2+) serves as cofactor.

Its subcellular location is the plastid. It is found in the chloroplast. It participates in lipid metabolism; fatty acid metabolism. Introduces a cis double bond in the acyl chain of an acyl-[acyl-carrier protein]. The chain is Acyl-[acyl-carrier-protein] desaturase 4, chloroplastic from Oryza sativa subsp. japonica (Rice).